The chain runs to 352 residues: Photosystem II D2 protein (352 aa).

A helical transmembrane segment spans residues 40–60 (CAYLAVGAWFTGTTFVTSWYT). His-117 is a binding site for chlorophyll a. The chain crosses the membrane as a helical span at residues 124–140 (GFTLRQFEIARLIGLRP). The pheophytin a site is built by Gln-129 and Asn-142. Residues 152–165 (VFVSVFLLYPLGQA) traverse the membrane as a helical segment. Position 197 (His-197) interacts with chlorophyll a. A helical membrane pass occupies residues 207 to 227 (AALLCAIHGATVENTLFEDGD). A plastoquinone contacts are provided by His-214 and Phe-261. Residue His-214 coordinates Fe cation. A Fe cation-binding site is contributed by His-268. The chain crosses the membrane as a helical span at residues 278–294 (GLWMSAIGVVGLGVNLR).

It belongs to the reaction center PufL/M/PsbA/D family. PSII is composed of 1 copy each of membrane proteins PsbA, PsbB, PsbC, PsbD, PsbE, PsbF, PsbH, PsbI, PsbJ, PsbK, PsbL, PsbM, PsbT, PsbX, PsbY, PsbZ, Psb30/Ycf12, at least 3 peripheral proteins of the oxygen-evolving complex and a large number of cofactors. It forms dimeric complexes. The D1/D2 heterodimer binds P680, chlorophylls that are the primary electron donor of PSII, and subsequent electron acceptors. It shares a non-heme iron and each subunit binds pheophytin, quinone, additional chlorophylls, carotenoids and lipids. There is also a Cl(-1) ion associated with D1 and D2, which is required for oxygen evolution. The PSII complex binds additional chlorophylls, carotenoids and specific lipids. serves as cofactor.

The protein resides in the plastid. It is found in the cyanelle thylakoid membrane. It carries out the reaction 2 a plastoquinone + 4 hnu + 2 H2O = 2 a plastoquinol + O2. Its function is as follows. Photosystem II (PSII) is a light-driven water:plastoquinone oxidoreductase that uses light energy to abstract electrons from H(2)O, generating O(2) and a proton gradient subsequently used for ATP formation. It consists of a core antenna complex that captures photons, and an electron transfer chain that converts photonic excitation into a charge separation. The D1/D2 (PsbA/PsbD) reaction center heterodimer binds P680, the primary electron donor of PSII as well as several subsequent electron acceptors. D2 is needed for assembly of a stable PSII complex. The polypeptide is Photosystem II D2 protein (Cyanophora paradoxa).